The sequence spans 448 residues: Exodeoxyribonuclease 7 large subunit (448 aa).

This sequence belongs to the XseA family. In terms of assembly, heterooligomer composed of large and small subunits.

The protein localises to the cytoplasm. The enzyme catalyses Exonucleolytic cleavage in either 5'- to 3'- or 3'- to 5'-direction to yield nucleoside 5'-phosphates.. Functionally, bidirectionally degrades single-stranded DNA into large acid-insoluble oligonucleotides, which are then degraded further into small acid-soluble oligonucleotides. The polypeptide is Exodeoxyribonuclease 7 large subunit (Shewanella baltica (strain OS155 / ATCC BAA-1091)).